The sequence spans 66 residues: Large ribosomal subunit protein uL30 (66 aa).

The protein belongs to the universal ribosomal protein uL30 family. As to quaternary structure, part of the 50S ribosomal subunit.

The chain is Large ribosomal subunit protein uL30 from Azorhizobium caulinodans (strain ATCC 43989 / DSM 5975 / JCM 20966 / LMG 6465 / NBRC 14845 / NCIMB 13405 / ORS 571).